Here is a 1199-residue protein sequence, read N- to C-terminus: Putative pyruvate-flavodoxin oxidoreductase (1199 aa).

4Fe-4S ferredoxin-type domains follow at residues 681–710 and 737–766; these read EIPVWDPDVCVQCGKCVIVCPHAVIRGKVY and FTIQVAPEDCTGCGICVDVCPAKNKSQPRL. Cysteine 690, cysteine 693, cysteine 696, cysteine 700, cysteine 746, cysteine 749, cysteine 752, cysteine 756, cysteine 820, cysteine 823, cysteine 848, and cysteine 1079 together coordinate [4Fe-4S] cluster.

The protein belongs to the pyruvate:ferredoxin/flavodoxin oxidoreductase family. [4Fe-4S] cluster serves as cofactor.

The enzyme catalyses oxidized [flavodoxin] + pyruvate + CoA + 2 H(+) = reduced [flavodoxin] + acetyl-CoA + CO2. Functionally, oxidoreductase required for the transfer of electrons from pyruvate to flavodoxin. In Synechocystis sp. (strain ATCC 27184 / PCC 6803 / Kazusa), this protein is Putative pyruvate-flavodoxin oxidoreductase (nifJ).